A 241-amino-acid polypeptide reads, in one-letter code: Aspartate/glutamate leucyltransferase (241 aa).

Belongs to the R-transferase family. Bpt subfamily.

It is found in the cytoplasm. It carries out the reaction N-terminal L-glutamyl-[protein] + L-leucyl-tRNA(Leu) = N-terminal L-leucyl-L-glutamyl-[protein] + tRNA(Leu) + H(+). It catalyses the reaction N-terminal L-aspartyl-[protein] + L-leucyl-tRNA(Leu) = N-terminal L-leucyl-L-aspartyl-[protein] + tRNA(Leu) + H(+). Its function is as follows. Functions in the N-end rule pathway of protein degradation where it conjugates Leu from its aminoacyl-tRNA to the N-termini of proteins containing an N-terminal aspartate or glutamate. The protein is Aspartate/glutamate leucyltransferase of Helicobacter hepaticus (strain ATCC 51449 / 3B1).